The following is a 216-amino-acid chain: ATP-dependent Clp protease proteolytic subunit (216 aa).

The active-site Nucleophile is serine 101. Histidine 126 is an active-site residue.

This sequence belongs to the peptidase S14 family. In terms of assembly, component of the chloroplastic Clp protease core complex.

It localises to the plastid. The protein localises to the chloroplast stroma. It carries out the reaction Hydrolysis of proteins to small peptides in the presence of ATP and magnesium. alpha-casein is the usual test substrate. In the absence of ATP, only oligopeptides shorter than five residues are hydrolyzed (such as succinyl-Leu-Tyr-|-NHMec, and Leu-Tyr-Leu-|-Tyr-Trp, in which cleavage of the -Tyr-|-Leu- and -Tyr-|-Trp bonds also occurs).. Its function is as follows. Cleaves peptides in various proteins in a process that requires ATP hydrolysis. Has a chymotrypsin-like activity. Plays a major role in the degradation of misfolded proteins. This is ATP-dependent Clp protease proteolytic subunit from Hordeum vulgare (Barley).